A 219-amino-acid polypeptide reads, in one-letter code: Ribose-5-phosphate isomerase A (219 aa).

Substrate is bound by residues 28 to 31, 81 to 84, and 94 to 97; these read TGST, DGAD, and KGGG. Glu-103 serves as the catalytic Proton acceptor. Lys-121 contributes to the substrate binding site.

This sequence belongs to the ribose 5-phosphate isomerase family. In terms of assembly, homodimer.

It catalyses the reaction aldehydo-D-ribose 5-phosphate = D-ribulose 5-phosphate. The protein operates within carbohydrate degradation; pentose phosphate pathway; D-ribose 5-phosphate from D-ribulose 5-phosphate (non-oxidative stage): step 1/1. Its function is as follows. Catalyzes the reversible conversion of ribose-5-phosphate to ribulose 5-phosphate. The sequence is that of Ribose-5-phosphate isomerase A from Acidithiobacillus ferrooxidans (strain ATCC 23270 / DSM 14882 / CIP 104768 / NCIMB 8455) (Ferrobacillus ferrooxidans (strain ATCC 23270)).